The chain runs to 123 residues: Small ribosomal subunit protein uS12 (123 aa).

3-methylthioaspartic acid is present on Asp89.

This sequence belongs to the universal ribosomal protein uS12 family. As to quaternary structure, part of the 30S ribosomal subunit. Contacts proteins S8 and S17. May interact with IF1 in the 30S initiation complex.

With S4 and S5 plays an important role in translational accuracy. In terms of biological role, interacts with and stabilizes bases of the 16S rRNA that are involved in tRNA selection in the A site and with the mRNA backbone. Located at the interface of the 30S and 50S subunits, it traverses the body of the 30S subunit contacting proteins on the other side and probably holding the rRNA structure together. The combined cluster of proteins S8, S12 and S17 appears to hold together the shoulder and platform of the 30S subunit. The sequence is that of Small ribosomal subunit protein uS12 from Bifidobacterium animalis subsp. lactis (strain AD011).